The primary structure comprises 285 residues: tRNA (cytidine(32)/guanosine(34)-2'-O)-methyltransferase (285 aa).

Positions 53, 55, 83, 99, and 124 each coordinate S-adenosyl-L-methionine. K164 acts as the Proton acceptor in catalysis.

The protein belongs to the class I-like SAM-binding methyltransferase superfamily. RNA methyltransferase RlmE family. TRM7 subfamily.

The protein localises to the cytoplasm. The enzyme catalyses cytidine(32)/guanosine(34) in tRNA + 2 S-adenosyl-L-methionine = 2'-O-methylcytidine(32)/2'-O-methylguanosine(34) in tRNA + 2 S-adenosyl-L-homocysteine + 2 H(+). In terms of biological role, methylates the 2'-O-ribose of nucleotides at positions 32 and 34 of the tRNA anticodon loop of substrate tRNAs. Requires trm732 for methylation of the cytidine at position 32 of the anticodon loop of substrate tRNAs. Requires trm734 for methylation of the nucleotide at position 34 of the anticodon loop of substrate tRNAs. Methylates tRNA(Phe). The polypeptide is tRNA (cytidine(32)/guanosine(34)-2'-O)-methyltransferase (Schizosaccharomyces pombe (strain 972 / ATCC 24843) (Fission yeast)).